We begin with the raw amino-acid sequence, 511 residues long: 2,3-bisphosphoglycerate-independent phosphoglycerate mutase (511 aa).

Asp12 contributes to the Mn(2+) binding site. Tyr36 carries the phosphotyrosine modification. Mn(2+) is bound at residue Ser62. Catalysis depends on Ser62, which acts as the Phosphoserine intermediate. Residues His123, 153-154 (RD), Arg185, Arg191, 261-264 (RPDR), and Lys336 contribute to the substrate site. Asp403, His407, Asp444, His445, and His462 together coordinate Mn(2+).

The protein belongs to the BPG-independent phosphoglycerate mutase family. As to quaternary structure, monomer. Requires Mn(2+) as cofactor.

The enzyme catalyses (2R)-2-phosphoglycerate = (2R)-3-phosphoglycerate. It functions in the pathway carbohydrate degradation; glycolysis; pyruvate from D-glyceraldehyde 3-phosphate: step 3/5. Catalyzes the interconversion of 2-phosphoglycerate and 3-phosphoglycerate. This chain is 2,3-bisphosphoglycerate-independent phosphoglycerate mutase, found in Geobacillus kaustophilus (strain HTA426).